A 461-amino-acid polypeptide reads, in one-letter code: Cysteine--tRNA ligase (461 aa).

Cysteine 28 lines the Zn(2+) pocket. The 'HIGH' region signature appears at 30-40; the sequence is ITVYDLCHIGH. Cysteine 209, histidine 234, and glutamate 238 together coordinate Zn(2+). The short motif at 266–270 is the 'KMSKS' region element; that stretch reads KMSKS. Lysine 269 lines the ATP pocket.

This sequence belongs to the class-I aminoacyl-tRNA synthetase family. Monomer. It depends on Zn(2+) as a cofactor.

The protein localises to the cytoplasm. The catalysed reaction is tRNA(Cys) + L-cysteine + ATP = L-cysteinyl-tRNA(Cys) + AMP + diphosphate. The protein is Cysteine--tRNA ligase of Enterobacter sp. (strain 638).